A 421-amino-acid polypeptide reads, in one-letter code: Bifunctional NAD biosynthesis protein NadR (421 aa).

The tract at residues 57 to 224 (EKKVGVIFGK…KFIPKEARPF (168 aa)) is nicotinamide mononucleotide adenylyltransferase. Residues 64–67 (FGKF), histidine 71, arginine 98, 139–152 (EDGI…WQSW), 172–174 (SSE), 199–201 (FNV), 254–256 (SAW), and 289–292 (YIDY) contribute to the NAD(+) site. The tract at residues 225 to 421 (FAKTVAILGG…TTFPIKGTSQ (197 aa)) is ribosylnicotinamide kinase.

In the N-terminal section; belongs to the bacterial NMN adenylyltransferase family. This sequence in the C-terminal section; belongs to the bacterial RNK family. As to quaternary structure, homotetramer.

The protein localises to the cell membrane. It localises to the cytoplasm. The catalysed reaction is beta-nicotinamide D-ribonucleotide + ATP + H(+) = diphosphate + NAD(+). The enzyme catalyses beta-nicotinamide D-riboside + ATP = beta-nicotinamide D-ribonucleotide + ADP + H(+). Its pathway is cofactor biosynthesis; NAD(+) biosynthesis [regulation]. The protein operates within cofactor biosynthesis; NAD(+) biosynthesis; NAD(+) from nicotinamide D-ribonucleotide: step 1/1. Its activity is regulated as follows. Feed-back regulated by NAD. At high levels of NAD the RN kinase activity is inhibited. In terms of biological role, this enzyme has two activities: nicotinamide mononucleotide (NMN) adenylyltransferase and ribosylnicotinamide (RN) kinase. The RN kinase activity catalyzes the phosphorylation of RN to form nicotinamide ribonucleotide. The NMN adenylyltransferase activity catalyzes the transfer of the AMP moiety of ATP to nicotinamide ribonucleotide to form NAD(+). This chain is Bifunctional NAD biosynthesis protein NadR (nadR), found in Haemophilus influenzae (strain ATCC 51907 / DSM 11121 / KW20 / Rd).